Here is an 866-residue protein sequence, read N- to C-terminus: N-alpha-acetyltransferase 15, NatA auxiliary subunit (866 aa).

4 TPR repeats span residues 46-79 (GETL…DLKS), 80-113 (HVCW…DKDN), 148-184 (RASW…SPDK), and 224-257 (LAVE…NPEN). K262 carries the post-translational modification N6-acetyllysine. S302 bears the Phosphoserine mark. TPR repeat units follow at residues 374-407 (LWVQ…TPTL), 409-441 (ELFL…DTAD), and 485-522 (MWFQ…TDDQ). Residues 500–866 (KFGEALKKCY…AEAEELANEI (367 aa)) are interaction with HYPK. Residues S537 and S588 each carry the phosphoserine modification. Residues 579-594 (EHEADTANMSDKELKK) are compositionally biased toward basic and acidic residues. Residues 579-642 (EHEADTANMS…EEIGGPKEEL (64 aa)) are disordered. The span at 595-604 (LRNKQRRAQK) shows a compositional bias: basic residues. A compositionally biased stretch (basic and acidic residues) spans 606 to 621 (AQIEEEKKNAEKEKQQ). Residues 672–705 (IETHLFAFEIYFRKEKFLLMLQSVKRAFAIDSSH) form a TPR 8 repeat. Residues K735 and K756 each carry the N6-acetyllysine modification. A phosphoserine mark is found at S855 and S856.

As to quaternary structure, component of the N-terminal acetyltransferase A (NatA) complex composed of NAA10 or probably NAA11 and NAA15. Interacts with XRCC6, NAA50 and XRCC5. Associates with HYPK when in a complex with NAA10. Interaction with HYPK reduces the capacity to interact with NAA50. Cleaved by caspases during apoptosis.

It localises to the cytoplasm. Its subcellular location is the nucleus. Functionally, auxillary subunit of the N-terminal acetyltransferase A (NatA) complex which displays alpha (N-terminal) acetyltransferase activity. The NAT activity may be important for vascular, hematopoietic and neuronal growth and development. Required to control retinal neovascularization in adult ocular endothelial cells. In complex with XRCC6 and XRCC5 (Ku80), up-regulates transcription from the osteocalcin promoter. The polypeptide is N-alpha-acetyltransferase 15, NatA auxiliary subunit (NAA15) (Pongo abelii (Sumatran orangutan)).